A 126-amino-acid chain; its full sequence is Small ribosomal subunit protein uS11 (126 aa).

This sequence belongs to the universal ribosomal protein uS11 family. In terms of assembly, part of the 30S ribosomal subunit.

Its function is as follows. Located on the platform of the 30S subunit. The chain is Small ribosomal subunit protein uS11 from Methanosarcina barkeri (strain Fusaro / DSM 804).